The following is a 262-amino-acid chain: pFDCC methylesterase MES16 (262 aa).

Residue Ser-87 is the Acyl-ester intermediate of the active site. Catalysis depends on charge relay system residues Asp-211 and His-239.

The protein belongs to the AB hydrolase superfamily. Methylesterase family.

The protein resides in the cytoplasm. It carries out the reaction methyl (indol-3-yl)acetate + H2O = (indol-3-yl)acetate + methanol + H(+). The catalysed reaction is methyl (-)-jasmonate + H2O = jasmonate + methanol + H(+). The enzyme catalyses primary fluorescent dioxobilin-type chlorophyll catabolite + H2O = O13(4)-desmethyl pFDCC + methanol + H(+). It participates in plant hormone biosynthesis. Its pathway is lipid metabolism; oxylipin biosynthesis. The protein operates within porphyrin-containing compound metabolism; chlorophyll degradation. Involved in the chlorophyll breakdown by its action in fluorescent chlorophyll catabolites (FCCs) demethylation. Demethylates the C13(2)-carboxymethyl group present at the isocyclic ring of chlorophyll. Uses primary fluorescent dioxobilin-type chlorophyll catabolite (pFDCC) as substrate to produce O13(4)-desmethyl pFDCC. Also able to catalyze pheophorbides in vitro. Methylesterase shown to have carboxylesterase activity, methyl indole-3-acetic acid (MeIAA) esterase activity and methyl jasmonate (MeJA) esterase activity in vitro. This Arabidopsis thaliana (Mouse-ear cress) protein is pFDCC methylesterase MES16.